We begin with the raw amino-acid sequence, 932 residues long: DNA mismatch repair protein MutS (932 aa).

An ATP-binding site is contributed by Gly615–Ser622.

Belongs to the DNA mismatch repair MutS family.

This protein is involved in the repair of mismatches in DNA. It is possible that it carries out the mismatch recognition step. This protein has a weak ATPase activity. This is DNA mismatch repair protein MutS from Clostridium botulinum (strain Hall / ATCC 3502 / NCTC 13319 / Type A).